Consider the following 129-residue polypeptide: Large ribosomal subunit protein bL12 (129 aa).

This sequence belongs to the bacterial ribosomal protein bL12 family. As to quaternary structure, homodimer. Part of the ribosomal stalk of the 50S ribosomal subunit. Forms a multimeric L10(L12)X complex, where L10 forms an elongated spine to which 2 to 4 L12 dimers bind in a sequential fashion. Binds GTP-bound translation factors.

Forms part of the ribosomal stalk which helps the ribosome interact with GTP-bound translation factors. Is thus essential for accurate translation. The polypeptide is Large ribosomal subunit protein bL12 (Maridesulfovibrio salexigens (strain ATCC 14822 / DSM 2638 / NCIMB 8403 / VKM B-1763) (Desulfovibrio salexigens)).